Consider the following 209-residue polypeptide: Large ribosomal subunit protein uL3 (209 aa).

Residue glutamine 150 is modified to N5-methylglutamine.

Belongs to the universal ribosomal protein uL3 family. In terms of assembly, part of the 50S ribosomal subunit. Forms a cluster with proteins L14 and L19. Post-translationally, methylated by PrmB.

One of the primary rRNA binding proteins, it binds directly near the 3'-end of the 23S rRNA, where it nucleates assembly of the 50S subunit. The chain is Large ribosomal subunit protein uL3 from Buchnera aphidicola subsp. Schizaphis graminum (strain Sg).